An 89-amino-acid chain; its full sequence is Small ribosomal subunit protein uS15 (89 aa).

It belongs to the universal ribosomal protein uS15 family. As to quaternary structure, part of the 30S ribosomal subunit. Forms a bridge to the 50S subunit in the 70S ribosome, contacting the 23S rRNA.

Its function is as follows. One of the primary rRNA binding proteins, it binds directly to 16S rRNA where it helps nucleate assembly of the platform of the 30S subunit by binding and bridging several RNA helices of the 16S rRNA. Functionally, forms an intersubunit bridge (bridge B4) with the 23S rRNA of the 50S subunit in the ribosome. The protein is Small ribosomal subunit protein uS15 of Acaryochloris marina (strain MBIC 11017).